A 153-amino-acid polypeptide reads, in one-letter code: Putative ATP synthase subunit f, mitochondrial (153 aa).

This sequence belongs to the ATPase F chain family. Subunit of the F-type ATPase which has 2 components, CF(1) - the catalytic core - and CF(0) - the membrane proton channel.

The protein resides in the mitochondrion membrane. Its function is as follows. Mitochondrial membrane ATP synthase (F(1)F(0) ATP synthase or Complex V) produces ATP from ADP in the presence of a proton gradient across the membrane which is generated by electron transport complexes of the respiratory chain. F-type ATPases consist of two structural domains, F(1) - containing the extramembraneous catalytic core and F(0) - containing the membrane proton channel, linked together by a central stalk and a peripheral stalk. During catalysis, ATP synthesis in the catalytic domain of F(1) is coupled via a rotary mechanism of the central stalk subunits to proton translocation. Part of the complex F(0) domain. Minor subunit located with subunit a in the membrane. The polypeptide is Putative ATP synthase subunit f, mitochondrial (Caenorhabditis elegans).